Here is a 66-residue protein sequence, read N- to C-terminus: Brevinin-1CDYd (66 aa).

A signal peptide spans 1-22 (MFTLKKSLLILFFLGTINFSLC). Positions 23 to 44 (EEERNAEEERRDDPEERDVEVE) are excised as a propeptide. Cysteines 60 and 66 form a disulfide.

Belongs to the frog skin active peptide (FSAP) family. Brevinin subfamily. Expressed by the skin glands.

The protein localises to the secreted. Its function is as follows. Antimicrobial peptide. This chain is Brevinin-1CDYd, found in Rana dybowskii (Dybovsky's frog).